A 544-amino-acid chain; its full sequence is Neurofilament light polypeptide (544 aa).

Ser2 carries the post-translational modification N-acetylserine. A head region spans residues 2–87 (SSYSYDPYYT…KIVRTQEKVQ (86 aa)). The IF rod domain maps to 84 to 394 (EKVQLQDLND…KLLEGEETRL (311 aa)). The coil 1A stretch occupies residues 88–119 (LQDLNDRFANFIERVHELEQRNKVLEAELLLL). The segment at 120–132 (RQKHNEPSRLRDM) is linker 1. The tract at residues 133-228 (YEKEVRDVRL…KVHEEELSQL (96 aa)) is coil 1B. Positions 229 to 246 (QSQVQYAQVSLEVEVAKP) are linker 12. Residues 247–265 (DLSSALRDIRGQYEKLAAK) are coil 2A. The linker 2 stretch occupies residues 266–274 (NMQSAEEWF). The segment at 275 to 390 (KSRFTVLTQS…AAYRKLLEGE (116 aa)) is coil 2B. The tail, subdomain A stretch occupies residues 391 to 435 (ETRLSFSGVGAITSGYTQSAPVFGRSAYSLQSSSYMTSRAFPTYY). Positions 391–544 (ETRLSFSGVG…EESEKKEKKK (154 aa)) are tail. Positions 436-544 (SSHVQEEQLD…EESEKKEKKK (109 aa)) are tail, subdomain B (acidic). Residues 450 to 544 (IESSRAEEAK…EESEKKEKKK (95 aa)) form a disordered region. The span at 451–462 (ESSRAEEAKAEA) shows a compositional bias: basic and acidic residues. Over residues 463–525 (PEEEEEEAAE…EAEGDGEEEG (63 aa)) the composition is skewed to acidic residues. Over residues 526–544 (ESKGDEAAEEESEKKEKKK) the composition is skewed to basic and acidic residues.

Belongs to the intermediate filament family. As to quaternary structure, forms homodimers (in vitro).

The protein localises to the cell projection. Its subcellular location is the axon. It localises to the cytoplasm. The protein resides in the cytoskeleton. Neurofilaments usually contain three intermediate filament proteins: NEFL, NEFM, and NEFH which are involved in the maintenance of neuronal caliber. May additionally cooperate with other neuronal intermediate filament proteins to form neuronal filamentous networks. The protein is Neurofilament light polypeptide (nefl) of Xenopus laevis (African clawed frog).